Here is a 257-residue protein sequence, read N- to C-terminus: UPF0246 protein Sbal223_3241 (257 aa).

This sequence belongs to the UPF0246 family.

In Shewanella baltica (strain OS223), this protein is UPF0246 protein Sbal223_3241.